Consider the following 368-residue polypeptide: Histidinol-phosphate aminotransferase (368 aa).

K215 is modified (N6-(pyridoxal phosphate)lysine).

The protein belongs to the class-II pyridoxal-phosphate-dependent aminotransferase family. Histidinol-phosphate aminotransferase subfamily. As to quaternary structure, homodimer. Pyridoxal 5'-phosphate serves as cofactor.

It catalyses the reaction L-histidinol phosphate + 2-oxoglutarate = 3-(imidazol-4-yl)-2-oxopropyl phosphate + L-glutamate. It functions in the pathway amino-acid biosynthesis; L-histidine biosynthesis; L-histidine from 5-phospho-alpha-D-ribose 1-diphosphate: step 7/9. The polypeptide is Histidinol-phosphate aminotransferase (Buchnera aphidicola subsp. Acyrthosiphon pisum (strain 5A)).